Here is a 200-residue protein sequence, read N- to C-terminus: NAD(P)H dehydrogenase (quinone) (200 aa).

One can recognise a Flavodoxin-like domain in the interval 4-191 (VLVLYYSSYG…DIARYQGKHV (188 aa)). Residues 10–15 (SSYGHV) and 79–81 (TRF) each bind FMN. An NAD(+)-binding site is contributed by Tyr-12. Residue Trp-99 participates in substrate binding. FMN contacts are provided by residues 114–120 (STGTQHG) and His-135.

The protein belongs to the WrbA family. FMN is required as a cofactor.

The catalysed reaction is a quinone + NADH + H(+) = a quinol + NAD(+). It carries out the reaction a quinone + NADPH + H(+) = a quinol + NADP(+). In Burkholderia vietnamiensis (strain G4 / LMG 22486) (Burkholderia cepacia (strain R1808)), this protein is NAD(P)H dehydrogenase (quinone).